Here is a 183-residue protein sequence, read N- to C-terminus: uncharacterized protein (183 aa).

Residues 55 to 183 (PRAAVLLVDL…RSRRGSRPAR (129 aa)) form the GGDEF domain.

Functionally, might be involved in pSAM2 replication control. This is an uncharacterized protein from Streptomyces ambofaciens.